The sequence spans 451 residues: Coproporphyrinogen III oxidase (451 aa).

Residues 10–15 (GGGISG), 36–37 (DP), 58–61 (GAEA), valine 242, tryptophan 393, and 429–431 (IGV) contribute to the FAD site.

Belongs to the protoporphyrinogen/coproporphyrinogen oxidase family. Coproporphyrinogen III oxidase subfamily. FAD is required as a cofactor.

It localises to the cytoplasm. It carries out the reaction coproporphyrinogen III + 3 O2 = coproporphyrin III + 3 H2O2. It participates in porphyrin-containing compound metabolism; protoheme biosynthesis. Its function is as follows. Involved in coproporphyrin-dependent heme b biosynthesis. Catalyzes the oxidation of coproporphyrinogen III to coproporphyrin III. The sequence is that of Coproporphyrinogen III oxidase from Mycobacterium leprae (strain TN).